Consider the following 283-residue polypeptide: Elongation factor Ts (283 aa).

Residues 80–83 are involved in Mg(2+) ion dislocation from EF-Tu; the sequence is TDFV.

This sequence belongs to the EF-Ts family.

It localises to the cytoplasm. In terms of biological role, associates with the EF-Tu.GDP complex and induces the exchange of GDP to GTP. It remains bound to the aminoacyl-tRNA.EF-Tu.GTP complex up to the GTP hydrolysis stage on the ribosome. In Haemophilus ducreyi (strain 35000HP / ATCC 700724), this protein is Elongation factor Ts.